The sequence spans 90 residues: Small ribosomal subunit protein uS17 (90 aa).

This sequence belongs to the universal ribosomal protein uS17 family. As to quaternary structure, part of the 30S ribosomal subunit.

Functionally, one of the primary rRNA binding proteins, it binds specifically to the 5'-end of 16S ribosomal RNA. The sequence is that of Small ribosomal subunit protein uS17 from Burkholderia cenocepacia (strain ATCC BAA-245 / DSM 16553 / LMG 16656 / NCTC 13227 / J2315 / CF5610) (Burkholderia cepacia (strain J2315)).